We begin with the raw amino-acid sequence, 684 residues long: ATP-dependent DNA helicase RecG (684 aa).

The interval 51–148 is wedge domain; the sequence is RHIASMATLQ…ADVPQFQAPH (98 aa). A Helicase ATP-binding domain is found at 278 to 439; that stretch reads DLARHRPMRR…VHADLEVSVI (162 aa). 291 to 298 contributes to the ATP binding site; the sequence is GDVGSGKT. A DEAH box motif is present at residues 392–395; that stretch reads DEQH.

It belongs to the helicase family. RecG subfamily. In terms of assembly, monomer.

It carries out the reaction Couples ATP hydrolysis with the unwinding of duplex DNA by translocating in the 3'-5' direction.. The catalysed reaction is ATP + H2O = ADP + phosphate + H(+). Its function is as follows. Plays a critical role in recombination and DNA repair. Helps process Holliday junction intermediates to mature products by catalyzing branch migration. Has replication fork regression activity, unwinds stalled or blocked replication forks to make a HJ that can be resolved. Has a DNA unwinding activity characteristic of a DNA helicase with 3'-5' polarity. The chain is ATP-dependent DNA helicase RecG from Acidithiobacillus ferridurans.